Consider the following 60-residue polypeptide: Short neurotoxin 1 (60 aa).

4 disulfides stabilise this stretch: Cys3–Cys22, Cys17–Cys39, Cys41–Cys52, and Cys53–Cys58.

This sequence belongs to the three-finger toxin family. Short-chain subfamily. Type I alpha-neurotoxin sub-subfamily. Expressed by the venom gland.

The protein localises to the secreted. Its function is as follows. Binds to muscle nicotinic acetylcholine receptor (nAChR) and inhibit acetylcholine from binding to the receptor, thereby impairing neuromuscular transmission. The sequence is that of Short neurotoxin 1 from Dendroaspis jamesoni kaimosae (Eastern Jameson's mamba).